We begin with the raw amino-acid sequence, 380 residues long: Probable inactive reductase easA (380 aa).

FMN is bound by residues 25-27 (PMT), Ala60, Gln102, and His171. Substrate is bound by residues His171 and Asn174. FMN-binding positions include Lys223, Gly299, 324–325 (GR), and Arg325. Position 352 (Tyr352) interacts with substrate.

The protein belongs to the NADH:flavin oxidoreductase/NADH oxidase family.

Probable inactive dehydrogenase; part of the gene cluster that mediates the biosynthesis of fungal ergot alkaloid ergovaline, the predominant ergopeptine product in E.festucae var. lolii. DmaW catalyzes the first step of ergot alkaloid biosynthesis by condensing dimethylallyl diphosphate (DMAP) and tryptophan to form 4-dimethylallyl-L-tryptophan. The second step is catalyzed by the methyltransferase easF that methylates 4-dimethylallyl-L-tryptophan in the presence of S-adenosyl-L-methionine, resulting in the formation of 4-dimethylallyl-L-abrine. The catalase easC and the FAD-dependent oxidoreductase easE then transform 4-dimethylallyl-L-abrine to chanoclavine-I which is further oxidized by easD in the presence of NAD(+), resulting in the formation of chanoclavine-I aldehyde. Agroclavine dehydrogenase easG then mediates the conversion of chanoclavine-I aldehyde to agroclavine via a non-enzymatic adduct reaction: the substrate is an iminium intermediate that is formed spontaneously from chanoclavine-I aldehyde in the presence of glutathione. The presence of easA is not required to complete this reaction. Further conversion of agroclavine to paspalic acid is a two-step process involving oxidation of agroclavine to elymoclavine and of elymoclavine to paspalic acid, the second step being performed by the elymoclavine oxidase cloA. Paspalic acid is then further converted to D-lysergic acid. Ergovaline is assembled from D-lysergic acid and three different amino acids by the D-lysergyl-peptide-synthetase composed of a monomudular (lpsB) and a trimodular (lpsA) nonribosomal peptide synthetase subunit. The protein is Probable inactive reductase easA of Epichloe festucae var. lolii (Neotyphodium lolii).